The chain runs to 526 residues: Probable di/tripeptide-binding protein 5 (526 aa).

A signal peptide spans 1–21; the sequence is MRLAAFSLFLAPLLLAQPAAA.

This sequence belongs to the bacterial solute-binding protein 5 family. In terms of assembly, the complex is composed of two ATP-binding proteins (DppD and DppF), two transmembrane proteins (DppB and DppC) and a solute-binding protein (DppA5). Five orthologous SBPs (DppA1-A5) are present in P.aeruginosa, which increases the substrate specificity of the DppBCDF transporter.

In terms of biological role, part of the ABC transporter DppABCDF involved in the uptake of various di/tripeptides. This is Probable di/tripeptide-binding protein 5 from Pseudomonas aeruginosa (strain UCBPP-PA14).